The chain runs to 163 residues: Small ribosomal subunit protein uS5 (163 aa).

The 64-residue stretch at 8–71 folds into the S5 DRBM domain; it reads LIEKIVDLNR…ERAKKGMVQV (64 aa).

Belongs to the universal ribosomal protein uS5 family. Part of the 30S ribosomal subunit. Contacts proteins S4 and S8.

Its function is as follows. With S4 and S12 plays an important role in translational accuracy. Functionally, located at the back of the 30S subunit body where it stabilizes the conformation of the head with respect to the body. The chain is Small ribosomal subunit protein uS5 from Oleidesulfovibrio alaskensis (strain ATCC BAA-1058 / DSM 17464 / G20) (Desulfovibrio alaskensis).